Here is a 401-residue protein sequence, read N- to C-terminus: Argininosuccinate synthase (401 aa).

An ATP-binding site is contributed by 8 to 16 (AYSGGLDTS). Tyr-85 provides a ligand contact to L-citrulline. Position 115 (Gly-115) interacts with ATP. L-aspartate-binding residues include Thr-117, Asn-121, and Asp-122. Asn-121 serves as a coordination point for L-citrulline. 4 residues coordinate L-citrulline: Arg-125, Ser-173, Glu-258, and Tyr-270.

Belongs to the argininosuccinate synthase family. Type 1 subfamily. In terms of assembly, homotetramer.

Its subcellular location is the cytoplasm. It carries out the reaction L-citrulline + L-aspartate + ATP = 2-(N(omega)-L-arginino)succinate + AMP + diphosphate + H(+). Its pathway is amino-acid biosynthesis; L-arginine biosynthesis; L-arginine from L-ornithine and carbamoyl phosphate: step 2/3. The chain is Argininosuccinate synthase from Staphylococcus aureus (strain Mu3 / ATCC 700698).